A 369-amino-acid chain; its full sequence is Protein V (369 aa).

Disordered regions lie at residues 1–24 (MDQD…GRES) and 38–320 (SEPT…GHRR). The segment covering 7-20 (ISKEDSEVEREASG) has biased composition (basic and acidic residues). Positions 50–61 (LHNTINTLQRPG) are enriched in polar residues. Composition is skewed to basic and acidic residues over residues 99–110 (AEAHARNVDKQN) and 150–168 (GAED…RGED). A phosphoserine; by host mark is found at S249, S257, and S260. Zn(2+) is bound by residues H318, C337, C341, C353, C355, C358, C362, and C365.

It belongs to the paramyxoviruses V protein family. In terms of assembly, interacts with host IFIH1/MDA5 and DHX58/LGP2. Interacts with host IRF3. Interacts with host RIGI regulatory protein (via CARDs domain) and host TRIM25 (via SPRY domain); these interactions prevent TRIM25-mediated ubiquitination of RIG-I and disrupts downstream RIG-I signaling.

It localises to the host cytoplasm. Its function is as follows. Plays an essential role in the inhibition of host immune response. Prevents the establishment of cellular antiviral state by blocking interferon-alpha/beta (IFN-alpha/beta) production and signaling pathway. Interacts with host IFIH1/MDA5 and DHX58/LGP2 to inhibit the transduction pathway involved in the activation of IFN-beta promoter, thus protecting the virus against cell antiviral state. Also interacts with and inhibits host IRF3. Blocks the type I interferon signaling pathway by disrupting the RIG-I signaling pathway. The sequence is that of Protein V (P/V/C) from Sendai virus (strain Hamamatsu) (SeV).